Here is a 2273-residue protein sequence, read N- to C-terminus: Retinal-specific phospholipid-transporting ATPase ABCA4 (2273 aa).

The Cytoplasmic segment spans residues M1–Q21. A helical transmembrane segment spans residues K22–L42. The Extracellular segment spans residues R43 to S646. Cystine bridges form between C54–C81 and C75–C324. N-linked (GlcNAc...) asparagine glycosylation is present at N98. Residues S336 and N338 each contribute to the Mg(2+) site. A disulfide bond links C370 and C519. 3 N-linked (GlcNAc...) asparagine glycosylation sites follow: N415, N444, and N504. R587 and R653 together coordinate an N-all-trans-retinylidenephosphatidylethanolamine. Cystine bridges form between C641-C1490, C1444-C1455, and C1488-C1502. The chain crosses the membrane as a helical span at residues F647–V667. The Cytoplasmic segment spans residues S668–T699. A helical transmembrane segment spans residues W700–M720. The Extracellular portion of the chain corresponds to H721–P730. Residues F731–L751 traverse the membrane as a helical segment. At S752–S759 the chain is on the cytoplasmic side. Residues L760–F780 form a helical membrane-spanning segment. Residues A781–S835 lie on the Extracellular side of the membrane. A helical transmembrane segment spans residues F836–Y856. At L857 to Q1376 the chain is on the cytoplasmic side. The disordered stretch occupies residues E891–E911. Phosphothreonine is present on T901. In terms of domain architecture, ABC transporter 1 spans V929 to V1160. F938, G966, and K969 together coordinate ATP. T970 serves as a coordination point for Mg(2+). Residues T971, Q1010, K1054, G1064, G1065, and H1118 each contribute to the ATP site. Position 1185 is a phosphoserine (S1185). The segment at P1284–N1345 is disordered. T1313 carries the phosphothreonine modification. S1317 bears the Phosphoserine mark. Positions G1331–P1340 are enriched in pro residues. The helical transmembrane segment at I1377–F1397 threads the bilayer. Residues G1398–N1727 lie on the Extracellular side of the membrane. N1469 carries N-linked (GlcNAc...) asparagine glycosylation. N1529, N1588, and N1662 each carry an N-linked (GlcNAc...) asparagine glycan. The chain crosses the membrane as a helical span at residues F1728–G1748. Topologically, residues F1749–N1759 are cytoplasmic. Residues L1760–P1780 form a helical membrane-spanning segment. Topologically, residues A1781–Y1792 are extracellular. The chain crosses the membrane as a helical span at residues V1793–L1813. Topologically, residues E1814–K1831 are cytoplasmic. The helical transmembrane segment at L1832–Q1852 threads the bilayer. The Extracellular portion of the chain corresponds to A1853 to D1873. A helical membrane pass occupies residues L1874 to L1894. The Cytoplasmic segment spans residues L1895 to D2273. The region spanning L1938–K2170 is the ABC transporter 2 domain. N1974, G1975, K1978, T1979, T1980, and G2073 together coordinate ATP. T1979 is a Mg(2+) binding site. The tract at residues V2244–A2249 is essential for ATP binding and ATPase activity.

It belongs to the ABC transporter superfamily. ABCA family. In terms of processing, proteolytic cleavage by trypsin leads to a 120-kDa N-terminal fragment and a 115-kDa C-terminal fragment that are linked through disulfide bonds. Post-translationally, N-glycosylated. Phosphorylation is independent of light exposure and modulates ATPase activity. Retinal-specific. Seems to be exclusively found in the rims of rod photoreceptor cells.

Its subcellular location is the membrane. It is found in the endoplasmic reticulum. The protein resides in the cytoplasmic vesicle. The protein localises to the cell projection. It localises to the cilium. Its subcellular location is the photoreceptor outer segment. The enzyme catalyses an N-all-trans-retinylidenephosphatidylethanolamine(out) + ATP + H2O = an N-all-trans-retinylidenephosphatidylethanolamine(in) + ADP + phosphate + H(+). It catalyses the reaction ATP + H2O + phospholipidSide 1 = ADP + phosphate + phospholipidSide 2.. It carries out the reaction a 1,2-diacyl-sn-glycero-3-phosphoethanolamine(out) + ATP + H2O = a 1,2-diacyl-sn-glycero-3-phosphoethanolamine(in) + ADP + phosphate + H(+). The catalysed reaction is N-11-cis-retinylidenephosphatidylethanolamine(out) + ATP + H2O = N-11-cis-retinylidenephosphatidylethanolamine(in) + ADP + phosphate + H(+). The enzyme catalyses ATP + H2O = ADP + phosphate + H(+). Its activity is regulated as follows. ATPase activity is decreased by cholesterol and ceramide. Phospholipids translocase activity is highly reduced by berylium fluoride and aluminum floride. N-ethylmaleimide inhibits phospholipid translocase activity. Functionally, flippase that catalyzes in an ATP-dependent manner the transport of retinal-phosphatidylethanolamine conjugates like 11-cis and all-trans isomers of N-retinylidene-phosphatidylethanolamine (N-Ret-PE) from the lumen to the cytoplasmic leaflet of photoreceptor outer segment disk membranes, where 11-cis-retinylidene-phosphatidylethanolamine is then isomerized to its all-trans isomer and reduced by RDH8 to produce all-trans-retinol. This transport activity ensures that all-trans-retinal generated from photoexcitation and 11-cis-retinal not needed for the regeneration of rhodopsin and cone opsins are effectively cleared from the photoreceptors, therefore preventing their accumulation and the formation of toxic bisretinoid. Displays ATPase activity in vitro in absence of retinal substrate. May display GTPase activity that is strongly influenced by the lipid environment and the presence of retinoid compounds. Binds the unprotonated form of N-retinylidene-phosphatidylethanolamine with high affinity in the absence of ATP, and ATP binding and hydrolysis induce a protein conformational change that causes N-retinylidene-phosphatidylethanolamine release. The protein is Retinal-specific phospholipid-transporting ATPase ABCA4 of Homo sapiens (Human).